The following is a 78-amino-acid chain: Conotoxin TsMEKL-P012 (78 aa).

A signal peptide spans 1-19; that stretch reads MEKLTILLLLAAVLVLAQA. A propeptide spanning residues 20 to 38 is cleaved from the precursor; it reads LIKKGGGEKRQKEKINFLS. Disulfide bonds link cysteine 52–cysteine 66, cysteine 59–cysteine 70, and cysteine 65–cysteine 75.

It belongs to the conotoxin O2 superfamily. Expressed by the venom duct.

Its subcellular location is the secreted. In Conus tessulatus (Tessellate cone), this protein is Conotoxin TsMEKL-P012.